Here is a 534-residue protein sequence, read N- to C-terminus: Inositol 1,4,5-trisphosphate receptor-interacting protein (534 aa).

The first 15 residues, 1–15 (MQGAIARMCVLVAAA), serve as a signal peptide directing secretion. The Extracellular segment spans residues 16–74 (ILNHPLLSPQENATLHDQDEELMARMREHEEMLEKEQAKLEKEFSQLTPEPENIGSEEE). Residues 25–63 (QENATLHDQDEELMARMREHEEMLEKEQAKLEKEFSQLT) adopt a coiled-coil conformation. The N-linked (GlcNAc...) asparagine glycan is linked to N27. Residues 75-91 (YSGYLWSSVVFLVFLVI) form a helical membrane-spanning segment. Topologically, residues 92–534 (EMFRMHGAHT…NGLCLLGDGV (443 aa)) are cytoplasmic.

It belongs to the ITPRIP family.

It is found in the cell membrane. Its subcellular location is the nucleus outer membrane. Enhances Ca(2+)-mediated inhibition of inositol 1,4,5-triphosphate receptor (ITPR) Ca(2+) release. The protein is Inositol 1,4,5-trisphosphate receptor-interacting protein (itprip) of Takifugu rubripes (Japanese pufferfish).